Consider the following 305-residue polypeptide: Phosphatidate cytidylyltransferase (305 aa).

The next 7 membrane-spanning stretches (helical) occupy residues 24 to 44 (LLVF…AFIV), 97 to 117 (PEHV…HLVF), 124 to 144 (LGPI…SVPI), 151 to 171 (LYGF…IFLI), 202 to 222 (TVVG…IFYS), 232 to 252 (IAMP…GFFG), and 277 to 297 (MLDV…ILLI).

The protein belongs to the CDS family.

It localises to the cell membrane. The enzyme catalyses a 1,2-diacyl-sn-glycero-3-phosphate + CTP + H(+) = a CDP-1,2-diacyl-sn-glycerol + diphosphate. It participates in phospholipid metabolism; CDP-diacylglycerol biosynthesis; CDP-diacylglycerol from sn-glycerol 3-phosphate: step 3/3. The polypeptide is Phosphatidate cytidylyltransferase (cdsA) (Chlamydia muridarum (strain MoPn / Nigg)).